Consider the following 602-residue polypeptide: uncharacterized protein (602 aa).

The region spanning 271 to 472 (IIDILADILI…RDEEVAKYIF (202 aa)) is the MCM domain. 315–322 (TEVGIDKT) serves as a coordination point for ATP.

This sequence belongs to the MCM family.

This is an uncharacterized protein from Methanocaldococcus jannaschii (strain ATCC 43067 / DSM 2661 / JAL-1 / JCM 10045 / NBRC 100440) (Methanococcus jannaschii).